A 157-amino-acid chain; its full sequence is Transcription antitermination protein NusB (157 aa).

It belongs to the NusB family.

Involved in transcription antitermination. Required for transcription of ribosomal RNA (rRNA) genes. Binds specifically to the boxA antiterminator sequence of the ribosomal RNA (rrn) operons. The sequence is that of Transcription antitermination protein NusB from Xylella fastidiosa (strain Temecula1 / ATCC 700964).